We begin with the raw amino-acid sequence, 383 residues long: MAAALRPSNRVLLQALQTLVYPGVGGSGSVSCRCPVGAKRYLLTDNVVKLKEFQQKKVAIACNLSGTKEMYFRNLKEKLTQNKLILKGELITLLHLCESRDHVELAKNVIYRYHAENKNFTLGEYKFGPLFMRLCYELNLEESAVELVKDQHLRGFFSDSTSFNILMDMLFIKGKYKSALEVLIEMKNQNVKFTTDTYVLAFAICYKLNSPESFKICTILGEKALLKGEILSRRASCFAVALALNQNEVAKAMSIFSQIMNPESIACVNLNIIIHIQSNMLENLIKTLNNAAEGNLSKFVKRNVFSEEVLAKVREKVKDVPALVAKFDEIYGILHITGQVTTDSLDAVLCHTPKDRKSHMLLLNKRMFSRRTSQPLSQSLLAE.

The stretch at 161–195 (TSFNILMDMLFIKGKYKSALEVLIEMKNQNVKFTT) is one PPR repeat. Ser-377 is modified (phosphoserine).

It belongs to the PTCD2 family.

The protein localises to the mitochondrion. Functionally, involved in mitochondrial RNA maturation and mitochondrial respiratory chain function. This is Pentatricopeptide repeat-containing protein 2, mitochondrial (PTCD2) from Pongo abelii (Sumatran orangutan).